The following is a 167-amino-acid chain: Cytochrome b6-f complex subunit 4 (167 aa).

3 helical membrane-spanning segments follow: residues 36 to 56, 95 to 115, and 131 to 151; these read LLYI…GLAV, LLGV…PFLE, and TVFL…TLPI.

The protein belongs to the cytochrome b family. PetD subfamily. The 4 large subunits of the cytochrome b6-f complex are cytochrome b6, subunit IV (17 kDa polypeptide, petD), cytochrome f and the Rieske protein, while the 4 small subunits are petG, petL, petM and petN. The complex functions as a dimer.

It is found in the plastid. The protein localises to the chloroplast thylakoid membrane. In terms of biological role, component of the cytochrome b6-f complex, which mediates electron transfer between photosystem II (PSII) and photosystem I (PSI), cyclic electron flow around PSI, and state transitions. This is Cytochrome b6-f complex subunit 4 from Calycanthus floridus var. glaucus (Eastern sweetshrub).